A 246-amino-acid polypeptide reads, in one-letter code: Probable transcriptional regulatory protein Ent638_2432 (246 aa).

The protein belongs to the TACO1 family.

The protein resides in the cytoplasm. The polypeptide is Probable transcriptional regulatory protein Ent638_2432 (Enterobacter sp. (strain 638)).